A 169-amino-acid polypeptide reads, in one-letter code: MICOS complex subunit MIC19 (169 aa).

Glycine 2 carries the N-myristoyl glycine lipid modification. The 43-residue stretch at 123 to 165 folds into the CHCH domain; the sequence is ENVCQDNENEIVRCLQENPGRVLKCAPLTEAFEKCVGEFRQQV. Short sequence motifs (cx9C motif) lie at residues 126–136 and 147–157; these read CQDNENEIVRC and CAPLTEAFEKC. 2 disulfide bridges follow: cysteine 126–cysteine 157 and cysteine 136–cysteine 147.

It belongs to the MICOS complex subunit Mic19 family. Metazoan Mic19 subfamily. As to quaternary structure, component of the mitochondrial contact site and cristae organizing system (MICOS) complex.

The protein resides in the mitochondrion inner membrane. Its function is as follows. Plays a role in maintaining mitochondrial morphology. May act as a component of the MICOS complex, a large protein complex of the mitochondria. The polypeptide is MICOS complex subunit MIC19 (Caenorhabditis elegans).